Reading from the N-terminus, the 238-residue chain is tRNA (guanine-N(7)-)-methyltransferase (238 aa).

Residues glutamate 68, glutamate 93, aspartate 120, and aspartate 143 each contribute to the S-adenosyl-L-methionine site. Residue aspartate 143 is part of the active site. Residues lysine 147, aspartate 179, and 216–219 (TKFE) each bind substrate.

Belongs to the class I-like SAM-binding methyltransferase superfamily. TrmB family.

It carries out the reaction guanosine(46) in tRNA + S-adenosyl-L-methionine = N(7)-methylguanosine(46) in tRNA + S-adenosyl-L-homocysteine. The protein operates within tRNA modification; N(7)-methylguanine-tRNA biosynthesis. Its function is as follows. Catalyzes the formation of N(7)-methylguanine at position 46 (m7G46) in tRNA. This is tRNA (guanine-N(7)-)-methyltransferase from Shewanella woodyi (strain ATCC 51908 / MS32).